Here is a 198-residue protein sequence, read N- to C-terminus: ATP-dependent Clp protease proteolytic subunit (198 aa).

The active-site Nucleophile is Ser98. His123 is an active-site residue.

It belongs to the peptidase S14 family. In terms of assembly, fourteen ClpP subunits assemble into 2 heptameric rings which stack back to back to give a disk-like structure with a central cavity, resembling the structure of eukaryotic proteasomes.

Its subcellular location is the cytoplasm. The catalysed reaction is Hydrolysis of proteins to small peptides in the presence of ATP and magnesium. alpha-casein is the usual test substrate. In the absence of ATP, only oligopeptides shorter than five residues are hydrolyzed (such as succinyl-Leu-Tyr-|-NHMec, and Leu-Tyr-Leu-|-Tyr-Trp, in which cleavage of the -Tyr-|-Leu- and -Tyr-|-Trp bonds also occurs).. In terms of biological role, cleaves peptides in various proteins in a process that requires ATP hydrolysis. Has a chymotrypsin-like activity. Plays a major role in the degradation of misfolded proteins. The sequence is that of ATP-dependent Clp protease proteolytic subunit from Listeria innocua serovar 6a (strain ATCC BAA-680 / CLIP 11262).